The chain runs to 573 residues: Adenine deaminase (573 aa).

It belongs to the metallo-dependent hydrolases superfamily. Adenine deaminase family. The cofactor is Mn(2+).

The catalysed reaction is adenine + H2O + H(+) = hypoxanthine + NH4(+). In Bacillus licheniformis (strain ATCC 14580 / DSM 13 / JCM 2505 / CCUG 7422 / NBRC 12200 / NCIMB 9375 / NCTC 10341 / NRRL NRS-1264 / Gibson 46), this protein is Adenine deaminase.